The primary structure comprises 550 residues: Leucine-rich repeat LGI family member 2 (550 aa).

The N-terminal stretch at 1-25 (MALWRGGGALGLLLLSAACLIPPSA) is a signal peptide. In terms of domain architecture, LRRNT spans 26 to 62 (QVRRLARCPATCSCTKESIICVGSSWVPRIVPGDISS). Asn-67 carries N-linked (GlcNAc...) asparagine glycosylation. LRR repeat units follow at residues 83–104 (SLQL…AFAG) and 107–128 (HLEY…AFRG). Positions 140–190 (NKFECDCKAKWLYLWLKMTNSTVSDVLCIGPPEYQEKKLNEVTSFDYECTT) constitute an LRRCT domain. The N-linked (GlcNAc...) asparagine glycan is linked to Asn-159. 7 EAR repeats span residues 224–266 (DFVV…EWDH), 270–312 (NFRS…KYDE), 316–363 (KFVK…KWNS), 365–408 (GFYS…QWNK), 412–455 (KFVP…RWNS), 457–499 (QFVE…QWDK), and 503–545 (QFKK…EHII). N-linked (GlcNAc...) asparagine glycosylation is present at Asn-276. Asn-407 carries an N-linked (GlcNAc...) asparagine glycan.

As to expression, brain.

Its subcellular location is the secreted. Its function is as follows. Required for the development of soma-targeting inhibitory GABAergic synapses made by parvalbumin-positive basket cells. This Mus musculus (Mouse) protein is Leucine-rich repeat LGI family member 2 (Lgi2).